The sequence spans 85 residues: YcgL domain-containing protein PC1_1941 (85 aa).

One can recognise a YcgL domain in the interval 1–85; sequence MFCVIYRSAK…PVENLLNTPV (85 aa).

The polypeptide is YcgL domain-containing protein PC1_1941 (Pectobacterium carotovorum subsp. carotovorum (strain PC1)).